We begin with the raw amino-acid sequence, 1115 residues long: Carbamoyl phosphate synthase large chain (1115 aa).

Residues 1–407 are carboxyphosphate synthetic domain; sequence MPRRTDLHHV…ALGKVMRSLE (407 aa). Arginine 134, arginine 174, glycine 180, glycine 181, glutamate 213, isoleucine 215, glutamate 220, glycine 246, valine 247, histidine 248, glutamine 290, and glutamate 304 together coordinate ATP. The 196-residue stretch at 138–333 folds into the ATP-grasp 1 domain; sequence KDIVAKAGGE…IAKIAAKLAI (196 aa). Residues glutamine 290, glutamate 304, and asparagine 306 each contribute to the Mg(2+) site. Glutamine 290, glutamate 304, and asparagine 306 together coordinate Mn(2+). The oligomerization domain stretch occupies residues 408 to 559; sequence TTRAGFWTAP…ELDPAAETEV (152 aa). The tract at residues 560 to 965 is carbamoyl phosphate synthetic domain; the sequence is APQTERPKVL…AFAKSQTAAY (406 aa). The 192-residue stretch at 693-884 folds into the ATP-grasp 2 domain; the sequence is GDLLSAAGLP…LAKACARIML (192 aa). Arginine 729, arginine 768, leucine 770, glutamate 775, glycine 800, isoleucine 801, histidine 802, serine 803, glutamine 843, and glutamate 855 together coordinate ATP. Glutamine 843, glutamate 855, and asparagine 857 together coordinate Mg(2+). Glutamine 843, glutamate 855, and asparagine 857 together coordinate Mn(2+). The 148-residue stretch at 966-1113 folds into the MGS-like domain; that stretch reads GSLPAQGTVF…QELHRVIGGV (148 aa). Positions 966–1115 are allosteric domain; the sequence is GSLPAQGTVF…LHRVIGGVER (150 aa).

It belongs to the CarB family. Composed of two chains; the small (or glutamine) chain promotes the hydrolysis of glutamine to ammonia, which is used by the large (or ammonia) chain to synthesize carbamoyl phosphate. Tetramer of heterodimers (alpha,beta)4. Requires Mg(2+) as cofactor. It depends on Mn(2+) as a cofactor.

It carries out the reaction hydrogencarbonate + L-glutamine + 2 ATP + H2O = carbamoyl phosphate + L-glutamate + 2 ADP + phosphate + 2 H(+). The enzyme catalyses hydrogencarbonate + NH4(+) + 2 ATP = carbamoyl phosphate + 2 ADP + phosphate + 2 H(+). It participates in amino-acid biosynthesis; L-arginine biosynthesis; carbamoyl phosphate from bicarbonate: step 1/1. Its pathway is pyrimidine metabolism; UMP biosynthesis via de novo pathway; (S)-dihydroorotate from bicarbonate: step 1/3. In terms of biological role, large subunit of the glutamine-dependent carbamoyl phosphate synthetase (CPSase). CPSase catalyzes the formation of carbamoyl phosphate from the ammonia moiety of glutamine, carbonate, and phosphate donated by ATP, constituting the first step of 2 biosynthetic pathways, one leading to arginine and/or urea and the other to pyrimidine nucleotides. The large subunit (synthetase) binds the substrates ammonia (free or transferred from glutamine from the small subunit), hydrogencarbonate and ATP and carries out an ATP-coupled ligase reaction, activating hydrogencarbonate by forming carboxy phosphate which reacts with ammonia to form carbamoyl phosphate. This chain is Carbamoyl phosphate synthase large chain, found in Mycobacterium bovis (strain ATCC BAA-935 / AF2122/97).